The primary structure comprises 699 residues: Endoplasmic reticulum mannosyl-oligosaccharide 1,2-alpha-mannosidase (699 aa).

Over Met-1 to Asn-84 the chain is Cytoplasmic. Residues Met-85–Ala-105 traverse the membrane as a helical; Signal-anchor for type II membrane protein segment. At Asp-106–Ala-699 the chain is on the lumenal side. A disordered region spans residues Ile-125–Pro-243. The segment covering Asp-176 to Pro-201 has biased composition (basic and acidic residues). Glu-330 (proton donor) is an active-site residue. The active site involves Asp-463. An intrachain disulfide couples Cys-527 to Cys-556. The active-site Proton donor is the Glu-570. Glu-599 is an active-site residue. Thr-688 contributes to the Ca(2+) binding site.

It belongs to the glycosyl hydrolase 47 family. It depends on Ca(2+) as a cofactor. In terms of tissue distribution, widely expressed.

The protein localises to the endoplasmic reticulum membrane. The enzyme catalyses N(4)-(alpha-D-Man-(1-&gt;2)-alpha-D-Man-(1-&gt;2)-alpha-D-Man-(1-&gt;3)-[alpha-D-Man-(1-&gt;2)-alpha-D-Man-(1-&gt;3)-[alpha-D-Man-(1-&gt;2)-alpha-D-Man-(1-&gt;6)]-alpha-D-Man-(1-&gt;6)]-beta-D-Man-(1-&gt;4)-beta-D-GlcNAc-(1-&gt;4)-beta-D-GlcNAc)-L-asparaginyl-[protein] (N-glucan mannose isomer 9A1,2,3B1,2,3) + 4 H2O = N(4)-(alpha-D-Man-(1-&gt;3)-[alpha-D-Man-(1-&gt;3)-[alpha-D-Man-(1-&gt;6)]-alpha-D-Man-(1-&gt;6)]-beta-D-Man-(1-&gt;4)-beta-D-GlcNAc-(1-&gt;4)-beta-D-GlcNAc)-L-asparaginyl-[protein] (N-glucan mannose isomer 5A1,2) + 4 beta-D-mannose. It catalyses the reaction N(4)-(alpha-D-Man-(1-&gt;2)-alpha-D-Man-(1-&gt;2)-alpha-D-Man-(1-&gt;3)-[alpha-D-Man-(1-&gt;3)-[alpha-D-Man-(1-&gt;2)-alpha-D-Man-(1-&gt;6)]-alpha-D-Man-(1-&gt;6)]-beta-D-Man-(1-&gt;4)-beta-D-GlcNAc-(1-&gt;4)-beta-D-GlcNAc)-L-asparaginyl-[protein] (N-glucan mannose isomer 8A1,2,3B1,3) + 3 H2O = N(4)-(alpha-D-Man-(1-&gt;3)-[alpha-D-Man-(1-&gt;3)-[alpha-D-Man-(1-&gt;6)]-alpha-D-Man-(1-&gt;6)]-beta-D-Man-(1-&gt;4)-beta-D-GlcNAc-(1-&gt;4)-beta-D-GlcNAc)-L-asparaginyl-[protein] (N-glucan mannose isomer 5A1,2) + 3 beta-D-mannose. It participates in protein modification; protein glycosylation. Its activity is regulated as follows. Inhibited by both 1-deoxymannojirimycin (dMNJ) and kifunensine. Involved in glycoprotein quality control targeting of misfolded glycoproteins for degradation. It primarily trims a single alpha-1,2-linked mannose residue from Man(9)GlcNAc(2) to produce Man(8)GlcNAc(2), but at high enzyme concentrations, as found in the ER quality control compartment (ERQC), it further trims the carbohydrates to Man(5-6)GlcNAc(2). In Homo sapiens (Human), this protein is Endoplasmic reticulum mannosyl-oligosaccharide 1,2-alpha-mannosidase (MAN1B1).